The sequence spans 171 residues: Neuronal vesicle trafficking-associated protein 2 (171 aa).

The interval 1–21 is disordered; it reads MVKLNGNPGEKGAKPPSVEDG. The Cytoplasmic portion of the chain corresponds to 1–71; it reads MVKLNGNPGE…FRVPKIAEFT (71 aa). A helical; Signal-anchor for type II membrane protein membrane pass occupies residues 72–92; sequence VTILVSLALAFLACIVFLVVY. Residues 93–171 are Lumenal-facing; the sequence is KAFTYDHSCP…EPKPPKTQGH (79 aa).

The protein belongs to the NSG family.

The protein localises to the membrane. It localises to the golgi apparatus. It is found in the trans-Golgi network membrane. The protein resides in the cell projection. Its subcellular location is the dendrite. The protein localises to the endosome membrane. It localises to the early endosome membrane. It is found in the late endosome membrane. The protein resides in the lysosome lumen. Its subcellular location is the cytoplasmic vesicle membrane. The protein localises to the golgi stack membrane. It localises to the endosome. It is found in the multivesicular body membrane. The polypeptide is Neuronal vesicle trafficking-associated protein 2 (Rattus norvegicus (Rat)).